We begin with the raw amino-acid sequence, 1274 residues long: DENN domain-containing protein 5B (1274 aa).

Position 2 is an N-acetylserine (Ser-2). The uDENN domain occupies 39–244; that stretch reads DELAGENFDQ…EVPLPPPGRS (206 aa). Phosphoserine is present on residues Ser-49 and Ser-178. In terms of domain architecture, cDENN spans 263–399; it reads ELPLSDYPLR…VDFIQELSEV (137 aa). Residues 401 to 581 form the dDENN domain; it reads LQFGIPPEGS…DNKIMSQWEE (181 aa). The RUN 1 domain occupies 772-932; the sequence is LEENTLIASL…DYFCFTSVFT (161 aa). Residue Ser-822 is modified to Phosphoserine. Residues 916 to 936 form a helical membrane-spanning segment; that stretch reads LLSLNAVDYFCFTSVFTTIMI. In terms of domain architecture, PLAT spans 936–1044; sequence IPYRSVIIPI…DDGSLERILI (109 aa). Thr-1062 is subject to Phosphothreonine. 3 positions are modified to phosphoserine: Ser-1068, Ser-1076, and Ser-1079. In terms of domain architecture, RUN 2 spans 1118 to 1267; that stretch reads TVLLCGENGL…QDFTIVLEGS (150 aa).

The protein belongs to the RAB6IP1 family.

It is found in the membrane. Functionally, guanine nucleotide exchange factor (GEF) which may activate RAB39A and/or RAB39B. Promotes the exchange of GDP to GTP, converting inactive GDP-bound Rab proteins into their active GTP-bound form. This chain is DENN domain-containing protein 5B (Dennd5b), found in Mus musculus (Mouse).